The following is a 642-amino-acid chain: Threonine--tRNA ligase (642 aa).

Residues Met-1–Thr-61 form the TGS domain. A catalytic region spans residues Asp-243 to Pro-534. Positions 334, 385, and 511 each coordinate Zn(2+).

The protein belongs to the class-II aminoacyl-tRNA synthetase family. In terms of assembly, homodimer. Requires Zn(2+) as cofactor.

The protein localises to the cytoplasm. It carries out the reaction tRNA(Thr) + L-threonine + ATP = L-threonyl-tRNA(Thr) + AMP + diphosphate + H(+). Catalyzes the attachment of threonine to tRNA(Thr) in a two-step reaction: L-threonine is first activated by ATP to form Thr-AMP and then transferred to the acceptor end of tRNA(Thr). Also edits incorrectly charged L-seryl-tRNA(Thr). The polypeptide is Threonine--tRNA ligase (Histophilus somni (strain 129Pt) (Haemophilus somnus)).